We begin with the raw amino-acid sequence, 248 residues long: Phosphoglycerate mutase (248 aa).

Substrate-binding positions include Arg8–Asn15, Thr21–Gly22, Arg60, Glu87–Tyr90, Lys98, Arg114–Arg115, and Gly183–Asn184. The active-site Tele-phosphohistidine intermediate is the His9. Glu87 acts as the Proton donor/acceptor in catalysis.

This sequence belongs to the phosphoglycerate mutase family. BPG-dependent PGAM subfamily.

The protein resides in the cytoplasm. The catalysed reaction is (2R)-2-phosphoglycerate = (2R)-3-phosphoglycerate. It participates in carbohydrate degradation; glycolysis; pyruvate from D-glyceraldehyde 3-phosphate: step 3/5. The sequence is that of Phosphoglycerate mutase (GPM1) from Candida albicans (strain SC5314 / ATCC MYA-2876) (Yeast).